The primary structure comprises 744 residues: CCR4-NOT transcription complex subunit 10 (744 aa).

Residues 1 to 16 show a composition bias toward basic and acidic residues; sequence MAADKPADQGAEKHEG. The disordered stretch occupies residues 1 to 25; that stretch reads MAADKPADQGAEKHEGTGQSSGITD. A2 carries the post-translational modification N-acetylalanine. A coiled-coil region spans residues 74–107; that stretch reads KSNQTTTDNLRQTLNQLKNQVHSAVEEMDGLDDV. Over residues 183 to 199 the composition is skewed to low complexity; that stretch reads NNNKNGKNETGNNNNKD. Disordered stretches follow at residues 183 to 204, 477 to 521, and 602 to 634; these read NNNK…SNHK, QDPK…PPSS, and VSLG…PQCY. Residues 484–495 show a composition bias toward polar residues; it reads GAKNSNQLGGNT. The segment covering 496–506 has biased composition (low complexity); it reads ESSESSETCSS. The segment covering 602–612 has biased composition (polar residues); it reads VSLGISSNEQD.

The protein belongs to the CNOT10 family. In terms of assembly, component of the CCR4-NOT complex; distinct complexes seem to exist that differ in the participation of probably mutually exclusive catalytic subunits. CNOT10 and CNOT11 form a subcomplex docked to the CNOT1 scaffold.

Its subcellular location is the cytoplasm. The protein resides in the nucleus. Functionally, component of the CCR4-NOT complex which is one of the major cellular mRNA deadenylases and is linked to various cellular processes including bulk mRNA degradation, miRNA-mediated repression, translational repression during translational initiation and general transcription regulation. Additional complex functions may be a consequence of its influence on mRNA expression. Is not required for association of CNOT7 to the CCR4-NOT complex. This chain is CCR4-NOT transcription complex subunit 10 (CNOT10), found in Homo sapiens (Human).